A 93-amino-acid polypeptide reads, in one-letter code: Small ribosomal subunit protein uS19 (93 aa).

Belongs to the universal ribosomal protein uS19 family.

Protein S19 forms a complex with S13 that binds strongly to the 16S ribosomal RNA. The polypeptide is Small ribosomal subunit protein uS19 (Latilactobacillus sakei subsp. sakei (strain 23K) (Lactobacillus sakei subsp. sakei)).